We begin with the raw amino-acid sequence, 458 residues long: MVNVLVVGDLMIDHYVWGSCDRISPEAPVQVVNIKNETKRLGGLGNVVSNLKTLGSEVGVISVVGDDDVGDEILELLKDRGAKTELIIKEKGRKSSQKSRIMVAHQQVLRLDTESVCEIGVSDDIISKFENILSGYDIVLLSDYGKGVLSPYLTKEIIRITKKSGKMVLIDPKGKDYSKYSGATLLTPNKKEASEALGFGINDEDDLKHALKMLKDKFKLNYSLITLSEDGIALLDEDVKKFPALAKEVFDVTGAGDSVLATLGYCLASKMSLEESIEIANLAAAVVVGKVGSADASWGEIENLKSKKSGFERKIISLDELLRVDRSGKTMVFTNGCFDILHFGHISYLQSAKKIGDMLVVGLNSDRSVKELKGDNRPVNAQSDRASMLAALEFVDFVVIFDEDTPLNLIKTLKPDILVKGADYTGKKVVGSEFVREVKLIDFVDGKSTTNIINKIKG.

The segment at 1–311 (MVNVLVVGDL…ENLKSKKSGF (311 aa)) is ribokinase. 189–192 (NKKE) serves as a coordination point for ATP. Aspartate 257 is an active-site residue. A cytidylyltransferase region spans residues 333–458 (FTNGCFDILH…TTNIINKIKG (126 aa)).

This sequence in the N-terminal section; belongs to the carbohydrate kinase PfkB family. In the C-terminal section; belongs to the cytidylyltransferase family. As to quaternary structure, homodimer.

The enzyme catalyses D-glycero-beta-D-manno-heptose 7-phosphate + ATP = D-glycero-beta-D-manno-heptose 1,7-bisphosphate + ADP + H(+). It catalyses the reaction D-glycero-beta-D-manno-heptose 1-phosphate + ATP + H(+) = ADP-D-glycero-beta-D-manno-heptose + diphosphate. It participates in nucleotide-sugar biosynthesis; ADP-L-glycero-beta-D-manno-heptose biosynthesis; ADP-L-glycero-beta-D-manno-heptose from D-glycero-beta-D-manno-heptose 7-phosphate: step 1/4. The protein operates within nucleotide-sugar biosynthesis; ADP-L-glycero-beta-D-manno-heptose biosynthesis; ADP-L-glycero-beta-D-manno-heptose from D-glycero-beta-D-manno-heptose 7-phosphate: step 3/4. Catalyzes the phosphorylation of D-glycero-D-manno-heptose 7-phosphate at the C-1 position to selectively form D-glycero-beta-D-manno-heptose-1,7-bisphosphate. Its function is as follows. Catalyzes the ADP transfer from ATP to D-glycero-beta-D-manno-heptose 1-phosphate, yielding ADP-D-glycero-beta-D-manno-heptose. This chain is Bifunctional protein HldE, found in Campylobacter fetus subsp. fetus (strain 82-40).